A 157-amino-acid chain; its full sequence is Transcription elongation factor GreA (157 aa).

The stretch at 47-75 forms a coiled coil; it reads ENAEYDAAREKQGQIEDRITELENILSNA.

This sequence belongs to the GreA/GreB family.

Its function is as follows. Necessary for efficient RNA polymerase transcription elongation past template-encoded arresting sites. The arresting sites in DNA have the property of trapping a certain fraction of elongating RNA polymerases that pass through, resulting in locked ternary complexes. Cleavage of the nascent transcript by cleavage factors such as GreA or GreB allows the resumption of elongation from the new 3'terminus. GreA releases sequences of 2 to 3 nucleotides. The polypeptide is Transcription elongation factor GreA (Mycoplasmopsis pulmonis (strain UAB CTIP) (Mycoplasma pulmonis)).